A 149-amino-acid polypeptide reads, in one-letter code: Large ribosomal subunit protein bL9 (149 aa).

The protein belongs to the bacterial ribosomal protein bL9 family.

Functionally, binds to the 23S rRNA. The polypeptide is Large ribosomal subunit protein bL9 (Buchnera aphidicola subsp. Cinara cedri (strain Cc)).